Here is a 22-residue protein sequence, read N- to C-terminus: C-type natriuretic peptide (22 aa).

Residues cysteine 6 and cysteine 22 are joined by a disulfide bond.

It belongs to the natriuretic peptide family.

The protein resides in the secreted. Its function is as follows. Hormone which plays a role in endochondral ossification through regulation of cartilaginous growth plate chondrocytes proliferation and differentiation. May also be vasoactive and natriuretic. Specifically binds and stimulates the cGMP production of the NPR2 receptor. Binds the clearance receptor NPR3. This chain is C-type natriuretic peptide (NPPC), found in Gallus gallus (Chicken).